Reading from the N-terminus, the 831-residue chain is V-type proton ATPase subunit a (831 aa).

The Cytoplasmic segment spans residues 1–418 (MSPSLFRSEE…DSYGIATYRE (418 aa)). The chain crosses the membrane as a helical span at residues 419 to 437 (VNHGIVAIVTFPFLFAIMF). Over 438 to 439 (GD) the chain is Vacuolar. A helical transmembrane segment spans residues 440–456 (LGHGAIMASVALMFVLY). The Cytoplasmic segment spans residues 457-471 (EKTLGAKKDLDEIVG). A helical membrane pass occupies residues 472–501 (MVFYGRYIVLLMGLFSMYVGFVYNDLFSKP). The Vacuolar portion of the chain corresponds to 502 to 548 (MSIFSSRWVWPVKSEEAIARAVQVGTYPIGIDPTWHSADNNLLFMNS). The chain crosses the membrane as a helical span at residues 549-568 (YKMKLSIILGVIHMTFCLFL). The Cytoplasmic segment spans residues 569-586 (SLSNYRFFKRKLDIYAVF). The chain crosses the membrane as a helical span at residues 587–607 (VPSLIFLEAIFGYLVITIVYK). At 608-650 (WCIDWKAKDLQPPSLLNMLILMFLSPGTLEDQLYPGQKYLQVG) the chain is on the vacuolar side. Residues 651 to 670 (LVIAALICVPWLLIVKPFVL) form a helical membrane-spanning segment. Topologically, residues 671 to 723 (WRRHSNEENKYQSLNSDLPNVDEADALMAVDSQEKQAEPFELGEVVIHQVIHT) are cytoplasmic. A helical transmembrane segment spans residues 724 to 748 (IEFCLGCVSHTASYLRLWALSLAHN). At 749-769 (QLSSVLWNMTLANGFRMTGIV) the chain is on the vacuolar side. A helical transmembrane segment spans residues 770-808 (GSIFVVILFGFWFIATCVVLVAMEGTSAMLHSLRLHWVE). The Cytoplasmic portion of the chain corresponds to 809-831 (GMSKHFEGEGYAFTPFTFKVTAE).

It belongs to the V-ATPase 116 kDa subunit family. As to quaternary structure, V-ATPase is a heteromultimeric enzyme composed of a peripheral catalytic V1 complex (components A to H) attached to an integral membrane V0 proton pore complex (components: a, c, c', c'', d, e, f and VOA1).

Its subcellular location is the vacuole membrane. In terms of biological role, subunit of the V0 complex of vacuolar(H+)-ATPase (V-ATPase), a multisubunit enzyme composed of a peripheral complex (V1) that hydrolyzes ATP and a membrane integral complex (V0) that translocates protons. V-ATPase is responsible for acidifying and maintaining the pH of intracellular compartments. This chain is V-type proton ATPase subunit a (vph1), found in Schizosaccharomyces pombe (strain 972 / ATCC 24843) (Fission yeast).